The following is an 87-amino-acid chain: Asparagine--tRNA ligase, cytoplasmic (87 aa).

It belongs to the class-II aminoacyl-tRNA synthetase family.

It is found in the cytoplasm. The enzyme catalyses tRNA(Asn) + L-asparagine + ATP = L-asparaginyl-tRNA(Asn) + AMP + diphosphate + H(+). The polypeptide is Asparagine--tRNA ligase, cytoplasmic (DED81) (Saccharomyces paradoxus (Yeast)).